Here is a 691-residue protein sequence, read N- to C-terminus: MDAMTNKRLRLTLKTVRAFIFLGAFAALAAAAVFMTVILIAKYQGAPSVQVPQSTILYASDGSKLGETNYGEKRYWVPLKDMNPTIVKATVAIEDQNFYDHHGFDYKRMAGAALADLKAFAKVQGASTITQQYARNLYLEHDKTWKRKWNEAFYTIRLEQNYSKDEILEGYLNTIYYGHGAYGIEAASRLYFGKHAKNLTDAEAALLAGIPKGPSGYSPYVNETKAKERQKTIVRMMEKQQMISQKKADELIKEPLSYQPLNKQVSKRKAPYFYDNAMRELEKKLGMTREQIETSGLNVYTTVDKRMQRIAEETITETVNAGSDIQVGFSAIDPRTGNVLALVGGRDYQKSPFDRTTQAKRQPASTIKPLLYYKAIQSGFTPVTLMKSEETEFQIDAKGETYSPSNYNGYYANKPITLLQALALSDNIYAVKTHLFLGTNKLVKTAKEFGITAHLQALPSLALGTEPVRPIEMVNAYAMLANGGKKIEPTFISRVTDAAGHVLYENPNQHKQVLDEKAAFVTASMMTGMFDIDLNGYTSVTGRTIANRLTRTYAGKSGTTSADSWMIGFNPKLAAGVWTGYDKNSTIDSVEEKSYAKTIWADFMEDALKGEPETAFKPPKGVTGVYIDPETGYSSGPGCAAKHYTYFVKGTEPANVCYGAEPAKQTKDRLPSKEKPASEKKWWDKWLGRHH.

The Cytoplasmic segment spans residues 1 to 19 (MDAMTNKRLRLTLKTVRAF). A helical; Signal-anchor for type II membrane protein transmembrane segment spans residues 20–40 (IFLGAFAALAAAAVFMTVILI). Residues 41-691 (AKYQGAPSVQ…WWDKWLGRHH (651 aa)) are Extracellular-facing. A transglycosylase region spans residues 55–223 (TILYASDGSK…PSGYSPYVNE (169 aa)). The active-site Proton donor; for transglycosylase activity is glutamate 94. Positions 327–605 (VGFSAIDPRT…AKTIWADFME (279 aa)) are transpeptidase. Serine 365 (acyl-ester intermediate; for transpeptidase activity) is an active-site residue. The segment at 663–691 (AKQTKDRLPSKEKPASEKKWWDKWLGRHH) is disordered. Positions 664-691 (KQTKDRLPSKEKPASEKKWWDKWLGRHH) are enriched in basic and acidic residues.

It in the N-terminal section; belongs to the glycosyltransferase 51 family. In the C-terminal section; belongs to the transpeptidase family.

The protein resides in the cell membrane. It catalyses the reaction [GlcNAc-(1-&gt;4)-Mur2Ac(oyl-L-Ala-gamma-D-Glu-L-Lys-D-Ala-D-Ala)](n)-di-trans,octa-cis-undecaprenyl diphosphate + beta-D-GlcNAc-(1-&gt;4)-Mur2Ac(oyl-L-Ala-gamma-D-Glu-L-Lys-D-Ala-D-Ala)-di-trans,octa-cis-undecaprenyl diphosphate = [GlcNAc-(1-&gt;4)-Mur2Ac(oyl-L-Ala-gamma-D-Glu-L-Lys-D-Ala-D-Ala)](n+1)-di-trans,octa-cis-undecaprenyl diphosphate + di-trans,octa-cis-undecaprenyl diphosphate + H(+). The catalysed reaction is Preferential cleavage: (Ac)2-L-Lys-D-Ala-|-D-Ala. Also transpeptidation of peptidyl-alanyl moieties that are N-acyl substituents of D-alanine.. It functions in the pathway cell wall biogenesis; peptidoglycan biosynthesis. In terms of biological role, involved in the polymerization and cross-linking of spore peptidoglycan. May be required for synthesis of the spore germ cell wall, the first layer of peptidoglycan synthesized on the surface of the inner forespore membrane. The chain is Penicillin-binding protein 2D (pbpG) from Bacillus subtilis (strain 168).